Consider the following 575-residue polypeptide: Chaperonin CPN60-2, mitochondrial (575 aa).

A mitochondrion-targeting transit peptide spans 1 to 32 (MHRFASGLASKARLARKGANQIASRSSWSRNY).

The protein belongs to the chaperonin (HSP60) family.

The protein localises to the mitochondrion. Its function is as follows. Implicated in mitochondrial protein import and macromolecular assembly. May facilitate the correct folding of imported proteins. May also prevent misfolding and promote the refolding and proper assembly of unfolded polypeptides generated under stress conditions in the mitochondrial matrix. In Cucurbita maxima (Pumpkin), this protein is Chaperonin CPN60-2, mitochondrial (CPN60-2).